Consider the following 234-residue polypeptide: 2,3,4,5-tetrahydropyridine-2,6-dicarboxylate N-acetyltransferase (234 aa).

The protein belongs to the transferase hexapeptide repeat family. DapH subfamily.

The enzyme catalyses (S)-2,3,4,5-tetrahydrodipicolinate + acetyl-CoA + H2O = L-2-acetamido-6-oxoheptanedioate + CoA. Its pathway is amino-acid biosynthesis; L-lysine biosynthesis via DAP pathway; LL-2,6-diaminopimelate from (S)-tetrahydrodipicolinate (acetylase route): step 1/3. Catalyzes the transfer of an acetyl group from acetyl-CoA to tetrahydrodipicolinate. In Ligilactobacillus salivarius (strain UCC118) (Lactobacillus salivarius), this protein is 2,3,4,5-tetrahydropyridine-2,6-dicarboxylate N-acetyltransferase.